A 143-amino-acid polypeptide reads, in one-letter code: Transcriptional regulator MraZ (143 aa).

2 consecutive SpoVT-AbrB domains span residues 5 to 47 (TYTP…PRAE) and 76 to 119 (TDEQ…DAQA).

The protein belongs to the MraZ family. Forms oligomers.

The protein localises to the cytoplasm. It localises to the nucleoid. This Mycobacterium avium (strain 104) protein is Transcriptional regulator MraZ.